The sequence spans 521 residues: Acetylcholine receptor subunit delta (521 aa).

Positions 1-21 (MAWIWISLLLPILIYFPGCFS) are cleaved as a signal peptide. At 22–247 (ESEEERLLNH…ITFYLIIERK (226 aa)) the chain is on the extracellular side. N-linked (GlcNAc...) asparagine glycans are attached at residues asparagine 53 and asparagine 164. A disulfide bond links cysteine 151 and cysteine 165. A run of 3 helical transmembrane segments spans residues 248–272 (PLFYIINILAPCVLIALMANLVFYL), 280–297 (MTLAISVLLAQSVFLLLI), and 314–335 (YLMFIMVLVTIVVVSCVIVLNL). Over 336 to 475 (HFRTPSTHAI…WYRIARTVDR (140 aa)) the chain is Cytoplasmic. Position 394 is a phosphotyrosine; by Tyr-kinases (tyrosine 394). Residues 476–494 (LCLFLVTPVMIIGTLWIFL) form a helical membrane-spanning segment.

It belongs to the ligand-gated ion channel (TC 1.A.9) family. Acetylcholine receptor (TC 1.A.9.1) subfamily. In terms of assembly, pentamer of two alpha chains, and one each of the beta, delta, and gamma (in immature muscle) or epsilon (in mature muscle) chains.

It is found in the postsynaptic cell membrane. It localises to the cell membrane. The enzyme catalyses K(+)(in) = K(+)(out). The catalysed reaction is Na(+)(in) = Na(+)(out). Functionally, after binding acetylcholine, the AChR responds by an extensive change in conformation that affects all subunits and leads to opening of an ion-conducting channel across the plasma membrane. In Xenopus laevis (African clawed frog), this protein is Acetylcholine receptor subunit delta (chrnd).